A 291-amino-acid polypeptide reads, in one-letter code: Urease accessory protein UreD (291 aa).

This sequence belongs to the UreD family. UreD, UreF and UreG form a complex that acts as a GTP-hydrolysis-dependent molecular chaperone, activating the urease apoprotein by helping to assemble the nickel containing metallocenter of UreC. The UreE protein probably delivers the nickel.

The protein localises to the cytoplasm. Its function is as follows. Required for maturation of urease via the functional incorporation of the urease nickel metallocenter. The chain is Urease accessory protein UreD from Polynucleobacter asymbioticus (strain DSM 18221 / CIP 109841 / QLW-P1DMWA-1) (Polynucleobacter necessarius subsp. asymbioticus).